A 430-amino-acid polypeptide reads, in one-letter code: Adenylosuccinate synthetase (430 aa).

GTP-binding positions include 12 to 18 (GDEGKGK) and 40 to 42 (GHT). Asp-13 functions as the Proton acceptor in the catalytic mechanism. Mg(2+) contacts are provided by Asp-13 and Gly-40. IMP contacts are provided by residues 13 to 16 (DEGK), 38 to 41 (NAGH), Thr-130, Arg-144, Gln-224, Thr-239, and Arg-303. The active-site Proton donor is His-41. Residue 299–305 (VVTGRKR) participates in substrate binding. Residues Arg-305, 331 to 333 (KLD), and 413 to 415 (STS) each bind GTP.

It belongs to the adenylosuccinate synthetase family. In terms of assembly, homodimer. It depends on Mg(2+) as a cofactor.

The protein localises to the cytoplasm. The catalysed reaction is IMP + L-aspartate + GTP = N(6)-(1,2-dicarboxyethyl)-AMP + GDP + phosphate + 2 H(+). It participates in purine metabolism; AMP biosynthesis via de novo pathway; AMP from IMP: step 1/2. Functionally, plays an important role in the de novo pathway of purine nucleotide biosynthesis. Catalyzes the first committed step in the biosynthesis of AMP from IMP. This Methylobacterium sp. (strain 4-46) protein is Adenylosuccinate synthetase.